The chain runs to 396 residues: Elongation factor Tu (396 aa).

The region spanning 10–206 (KPHVNVGTIG…ALDSYIPEPV (197 aa)) is the tr-type G domain. The G1 stretch occupies residues 19-26 (GHIDHGKT). Residue 19–26 (GHIDHGKT) coordinates GTP. Thr26 lines the Mg(2+) pocket. The tract at residues 60–64 (TKTVT) is G2. The segment at 83–86 (DCPG) is G3. Residues 83 to 87 (DCPGH) and 138 to 141 (NKCD) contribute to the GTP site. The G4 stretch occupies residues 138–141 (NKCD). The tract at residues 176–178 (ASL) is G5.

The protein belongs to the TRAFAC class translation factor GTPase superfamily. Classic translation factor GTPase family. EF-Tu/EF-1A subfamily. As to quaternary structure, monomer.

It localises to the cytoplasm. The enzyme catalyses GTP + H2O = GDP + phosphate + H(+). Its function is as follows. GTP hydrolase that promotes the GTP-dependent binding of aminoacyl-tRNA to the A-site of ribosomes during protein biosynthesis. This chain is Elongation factor Tu, found in Sorangium cellulosum (strain So ce56) (Polyangium cellulosum (strain So ce56)).